We begin with the raw amino-acid sequence, 445 residues long: 3-phosphoshikimate 1-carboxyvinyltransferase (445 aa).

A disordered region spans residues 1-24; sequence MEHAATLPQTSRRPATPLTGTITV. The segment covering 7 to 22 has biased composition (polar residues); the sequence is LPQTSRRPATPLTGTI. Positions 28, 29, and 33 each coordinate 3-phosphoshikimate. Lys-28 contacts phosphoenolpyruvate. Residues Gly-101 and Arg-129 each coordinate phosphoenolpyruvate. Residues Ser-174, Gln-176, Asp-326, and Lys-353 each coordinate 3-phosphoshikimate. Residue Gln-176 coordinates phosphoenolpyruvate. Catalysis depends on Asp-326, which acts as the Proton acceptor. The phosphoenolpyruvate site is built by Arg-357 and Arg-399.

This sequence belongs to the EPSP synthase family. In terms of assembly, monomer.

The protein resides in the cytoplasm. The catalysed reaction is 3-phosphoshikimate + phosphoenolpyruvate = 5-O-(1-carboxyvinyl)-3-phosphoshikimate + phosphate. It participates in metabolic intermediate biosynthesis; chorismate biosynthesis; chorismate from D-erythrose 4-phosphate and phosphoenolpyruvate: step 6/7. Functionally, catalyzes the transfer of the enolpyruvyl moiety of phosphoenolpyruvate (PEP) to the 5-hydroxyl of shikimate-3-phosphate (S3P) to produce enolpyruvyl shikimate-3-phosphate and inorganic phosphate. The chain is 3-phosphoshikimate 1-carboxyvinyltransferase from Acidiphilium cryptum (strain JF-5).